The following is a 192-amino-acid chain: uncharacterized protein (192 aa).

A disordered region spans residues 71 to 100; it reads NNVLPEPSKPNNPVVNPPVSPIQPKTDPEQ. Positions 77-91 are enriched in pro residues; it reads PSKPNNPVVNPPVSP.

This is an uncharacterized protein from Caenorhabditis elegans.